Reading from the N-terminus, the 59-residue chain is Large ribosomal subunit protein uL30 (59 aa).

It belongs to the universal ribosomal protein uL30 family. In terms of assembly, part of the 50S ribosomal subunit.

The chain is Large ribosomal subunit protein uL30 from Syntrophotalea carbinolica (strain DSM 2380 / NBRC 103641 / GraBd1) (Pelobacter carbinolicus).